The primary structure comprises 325 residues: Elongation factor P--(R)-beta-lysine ligase (325 aa).

76–78 (SPE) lines the substrate pocket. Residues 100 to 102 (RNE) and Asn-109 contribute to the ATP site. Tyr-118 is a substrate binding site. Residue 244–245 (EL) participates in ATP binding. Residue Glu-251 participates in substrate binding. Gly-300 contributes to the ATP binding site.

This sequence belongs to the class-II aminoacyl-tRNA synthetase family. EpmA subfamily. In terms of assembly, homodimer.

The enzyme catalyses D-beta-lysine + L-lysyl-[protein] + ATP = N(6)-((3R)-3,6-diaminohexanoyl)-L-lysyl-[protein] + AMP + diphosphate + H(+). With EpmB is involved in the beta-lysylation step of the post-translational modification of translation elongation factor P (EF-P) on 'Lys-34'. Catalyzes the ATP-dependent activation of (R)-beta-lysine produced by EpmB, forming a lysyl-adenylate, from which the beta-lysyl moiety is then transferred to the epsilon-amino group of EF-P 'Lys-34'. The polypeptide is Elongation factor P--(R)-beta-lysine ligase (Salmonella paratyphi A (strain ATCC 9150 / SARB42)).